An 80-amino-acid polypeptide reads, in one-letter code: Metallothionein-like protein type 2, MT2-28 (80 aa).

The protein belongs to the metallothionein superfamily. Type 15 family.

Its function is as follows. Metallothioneins have a high content of cysteine residues that bind various heavy metals. This Brassica juncea (Indian mustard) protein is Metallothionein-like protein type 2, MT2-28.